Here is a 373-residue protein sequence, read N- to C-terminus: UDP-N-acetylglucosamine--N-acetylmuramyl-(pentapeptide) pyrophosphoryl-undecaprenol N-acetylglucosamine transferase (373 aa).

Residues Thr-10–Gly-12, Asn-124, Arg-166, Ser-196, and Gln-301 contribute to the UDP-N-acetyl-alpha-D-glucosamine site.

Belongs to the glycosyltransferase 28 family. MurG subfamily.

It is found in the cell membrane. The enzyme catalyses di-trans,octa-cis-undecaprenyl diphospho-N-acetyl-alpha-D-muramoyl-L-alanyl-D-glutamyl-meso-2,6-diaminopimeloyl-D-alanyl-D-alanine + UDP-N-acetyl-alpha-D-glucosamine = di-trans,octa-cis-undecaprenyl diphospho-[N-acetyl-alpha-D-glucosaminyl-(1-&gt;4)]-N-acetyl-alpha-D-muramoyl-L-alanyl-D-glutamyl-meso-2,6-diaminopimeloyl-D-alanyl-D-alanine + UDP + H(+). It participates in cell wall biogenesis; peptidoglycan biosynthesis. Functionally, cell wall formation. Catalyzes the transfer of a GlcNAc subunit on undecaprenyl-pyrophosphoryl-MurNAc-pentapeptide (lipid intermediate I) to form undecaprenyl-pyrophosphoryl-MurNAc-(pentapeptide)GlcNAc (lipid intermediate II). In Desulforudis audaxviator (strain MP104C), this protein is UDP-N-acetylglucosamine--N-acetylmuramyl-(pentapeptide) pyrophosphoryl-undecaprenol N-acetylglucosamine transferase.